The following is an 80-amino-acid chain: UPF0270 protein AHA_0994 (80 aa).

It belongs to the UPF0270 family.

This is UPF0270 protein AHA_0994 from Aeromonas hydrophila subsp. hydrophila (strain ATCC 7966 / DSM 30187 / BCRC 13018 / CCUG 14551 / JCM 1027 / KCTC 2358 / NCIMB 9240 / NCTC 8049).